The sequence spans 1084 residues: Cellulose synthase A catalytic subunit 6 [UDP-forming] (1084 aa).

M1 is modified (N-acetylmethionine). Residues 1-277 (MNTGGRLIAG…KSSKINPYRM (277 aa)) are Cytoplasmic-facing. Positions 39, 42, 58, 61, 66, 69, 81, and 84 each coordinate Zn(2+). The RING-type; degenerate zinc-finger motif lies at 39 to 85 (CQICRDEIELTVDGEPFVACNECAFPVCRPCYEYERREGNQACPQCK). The helical transmembrane segment at 278 to 298 (LIVLRLVILGLFFHYRILHPV) threads the bilayer. The Extracellular segment spans residues 299 to 300 (KD). A helical transmembrane segment spans residues 301–321 (AYALWLISVICEIWFAVSWVL). Over 322-868 (DQFPKWYPIE…INSVVYPWTS (547 aa)) the chain is Cytoplasmic. The UDP-alpha-D-glucose site is built by S360, K366, E367, and D396. D396 is an active-site residue. The stretch at 450-476 (VRERRAMKRDYEEFKVKINALVATAQK) forms a coiled coil. K537 contacts UDP-alpha-D-glucose. Mn(2+)-binding residues include K538 and D562. The stretch at 675-703 (RKAKTVAADKKKKNREASKQIHALENIEE) forms a coiled coil. The active site involves D785. A helical transmembrane segment spans residues 869–889 (LPLIVYCSLPAICLLTGKFIV). At 890-894 (PEISN) the chain is on the extracellular side. The helical transmembrane segment at 895 to 915 (YASILFMALFSSIAITGILEM) threads the bilayer. Residues 916–930 (QWGKVGIDDWWRNEQ) are Cytoplasmic-facing. The chain crosses the membrane as a helical span at residues 931 to 951 (FWVIGGVSAHLFALFQGLLKV). Topologically, residues 952-980 (LAGVDTNFTVTSKAADDGEFSDLYLFKWT) are extracellular. N958 carries an N-linked (GlcNAc...) asparagine glycan. The helical transmembrane segment at 981-1001 (SLLIPPMTLLIINVIGVIVGV) threads the bilayer. The Cytoplasmic portion of the chain corresponds to 1002–1012 (SDAISNGYDSW). Residues 1013 to 1033 (GPLFGRLFFALWVIIHLYPFL) traverse the membrane as a helical segment. Over 1034–1042 (KGLLGKQDR) the chain is Extracellular. Residues 1043 to 1063 (MPTIIVVWSILLASILTLLWV) traverse the membrane as a helical segment. Over 1064-1084 (RVNPFVAKGGPILEICGLDCL) the chain is Cytoplasmic.

Belongs to the glycosyltransferase 2 family. Plant cellulose synthase subfamily. Interacts with CESA1 and CESA3. Interacts with STL1 and STL2, but not with GOT1. Binds to CSI1 and CSI3. Interacts with PAT24/TIP1. Zn(2+) is required as a cofactor. The cofactor is Mn(2+). S-acylated. In terms of tissue distribution, expressed in germinating seeds, seedlings, roots, stems, leaves and flowers. Not present in mature flowers.

The protein resides in the cell membrane. It carries out the reaction [(1-&gt;4)-beta-D-glucosyl](n) + UDP-alpha-D-glucose = [(1-&gt;4)-beta-D-glucosyl](n+1) + UDP + H(+). The protein operates within glycan metabolism; plant cellulose biosynthesis. Catalytic subunit of cellulose synthase terminal complexes ('rosettes'), required for beta-1,4-glucan microfibril crystallization, a major mechanism of the cell wall formation. Involved in the primary cell wall formation. The presence of each protein CESA1 and CESA6 is critical for cell expansion. The hypocotyl elongation is based on a CESA6-dependent cell elongation in dark and a CESA6-independent cell elongation in light. The transition between these two mechanisms requires photosynthesis and PHYB, but not CRY1. The CESA6-dependent cell elongation seems to be independent of gibberellic acid, auxin and ethylene. May be involved in sensitivity to isoxaben. Associates with and moves along cortical microtubules for the process of cellulose deposition. The protein is Cellulose synthase A catalytic subunit 6 [UDP-forming] of Arabidopsis thaliana (Mouse-ear cress).